Reading from the N-terminus, the 337-residue chain is Anthranilate phosphoribosyltransferase (337 aa).

Residues G81, 84–85, S89, 91–94, 109–117, and A121 each bind 5-phospho-alpha-D-ribose 1-diphosphate; these read GD, NVST, and KHGNRALSS. G81 provides a ligand contact to anthranilate. S93 contributes to the Mg(2+) binding site. N112 serves as a coordination point for anthranilate. R167 is a binding site for anthranilate. Residues D226 and E227 each coordinate Mg(2+).

It belongs to the anthranilate phosphoribosyltransferase family. In terms of assembly, homodimer. The cofactor is Mg(2+).

The enzyme catalyses N-(5-phospho-beta-D-ribosyl)anthranilate + diphosphate = 5-phospho-alpha-D-ribose 1-diphosphate + anthranilate. The protein operates within amino-acid biosynthesis; L-tryptophan biosynthesis; L-tryptophan from chorismate: step 2/5. Functionally, catalyzes the transfer of the phosphoribosyl group of 5-phosphorylribose-1-pyrophosphate (PRPP) to anthranilate to yield N-(5'-phosphoribosyl)-anthranilate (PRA). In Bradyrhizobium diazoefficiens (strain JCM 10833 / BCRC 13528 / IAM 13628 / NBRC 14792 / USDA 110), this protein is Anthranilate phosphoribosyltransferase.